The following is a 269-amino-acid chain: Zinc transporter ZupT (269 aa).

8 helical membrane-spanning segments follow: residues 12–32, 41–61, 75–95, 126–146, 152–172, 187–207, 211–231, and 249–269; these read AFSITLAAGLFTVLGSGLVMF, LSFGLAFAGGAMVYVSLTEIF, DHAFAAATMAFLAGMGGIALI, MMAAFAITAHNFPEGLATFFA, AVGMPLALAIAIHNIPEGISI, VWACLLSGLAEPLGAALGYLV, FLSPAVFGSVFGVIAGVMVFL, and TVYGLTMGMAVIAVSLVLFHF. 2 residues coordinate Fe(2+): N136 and E139. 2 residues coordinate Zn(2+): E139 and H164. Fe(2+) is bound by residues N165, E168, and E197. E168 contacts Zn(2+).

This sequence belongs to the ZIP transporter (TC 2.A.5) family. ZupT subfamily.

It localises to the cell inner membrane. The enzyme catalyses Zn(2+)(in) = Zn(2+)(out). In terms of biological role, mediates zinc uptake. May also transport other divalent cations. The sequence is that of Zinc transporter ZupT from Neisseria meningitidis serogroup A / serotype 4A (strain DSM 15465 / Z2491).